The sequence spans 225 residues: MSDGTLFTDLKERKLIRTIVPRGLVRSLKLDVKLADPSDAQQLYEREFPLRKYPTFVGPHDEWTLTEAMAIDYYLIHLSSDKEAVRQLLGPEGDFKTRADILRWESLSNSDFLNEVCEVFFPLIGVKPYNATEFKAARENVDTIVSLYEKRLKKQQYLVCDDHETLADLISAAAFSLGFISFFDETWRSKHPEVTRWFNRVIKSRFFEGEFESFKMCETEMQPIK.

The 132-residue stretch at 94 to 225 (DFKTRADILR…MCETEMQPIK (132 aa)) folds into the GST C-terminal domain.

The protein is Putative elongation factor 1 gamma homolog of Saccharomyces cerevisiae (strain ATCC 204508 / S288c) (Baker's yeast).